The chain runs to 137 residues: Partner of bursicon (137 aa).

The signal sequence occupies residues 1–24 (MNIMITKIFFLVQLFYIVVSKSSA). 5 cysteine pairs are disulfide-bonded: Cys28/Cys86, Cys52/Cys101, Cys61/Cys127, Cys65/Cys129, and Cys83/Cys132. The 96-residue stretch at 28-123 (CETVASEVHV…NALMEVRLRE (96 aa)) folds into the CTCK domain.

In terms of assembly, heterodimer of burs and pburs.

The protein resides in the secreted. Final heterodimeric neurohormone released at the end of the molting cycle, involved in the sclerotization (tanning) of the insect cuticle, melanization and wing spreading. In Bombyx mori (Silk moth), this protein is Partner of bursicon.